Here is a 260-residue protein sequence, read N- to C-terminus: GDNF family receptor alpha-4 (260 aa).

Residues 1–23 (MAHCMESALLLLLLLGSASFTDG) form the signal peptide. Residue Asn184 is glycosylated (N-linked (GlcNAc...) asparagine). Thr237 is lipidated: GPI-anchor amidated threonine. Residues 238–260 (AGCCFPRVSWLYALTALALQALL) constitute a propeptide, removed in mature form.

It belongs to the GDNFR family. In terms of assembly, interacts with ARTN ligand and RET: forms a 2:2:2 ternary complex composed of ARTN ligand, GFRA3 and RET receptor. Interacts with SORL1. In terms of tissue distribution, expressed in many tissues including adrenal medulla, brain neurons, with highest levels in the cerebral cortex and hippocampus. Moderate levels found in the gut circular muscle and myenteric ganglia as well as in other peripheral ganglia, including the sensory dorsal root and trigeminal as well as superior cervical and sympathetic chain ganglia. Isoform a1, isoform a2, isoform b1 and isoform b2 are exclusively found in the thyroid, parthyroid and pituitary glands.

The protein resides in the cell membrane. It is found in the secreted. Functionally, receptor for persephin (PSPN), a growth factor that exhibits neurotrophic activity on mesencephalic dopaminergic and motor neurons. Acts by binding to its coreceptor, GFRA4, leading to autophosphorylation and activation of the RET receptor. May be important in C-cell development and, in the postnatal development of the adrenal medulla. This Mus musculus (Mouse) protein is GDNF family receptor alpha-4 (Gfra4).